The following is a 284-amino-acid chain: Transmembrane protein 163b (284 aa).

Positions Met-1–Ala-44 are disordered. Residues Met-1 to Ala-83 are Cytoplasmic-facing. Residues Leu-84–Val-104 form a helical membrane-spanning segment. Residues Ser-105–Ala-111 are Extracellular-facing. Residues Ser-112–Trp-132 form a helical membrane-spanning segment. Over Arg-133–Arg-145 the chain is Cytoplasmic. A helical transmembrane segment spans residues Glu-146–Val-166. The Extracellular segment spans residues Lys-167–Asp-182. A helical membrane pass occupies residues Phe-183 to Phe-203. Topologically, residues Met-204–Arg-212 are cytoplasmic. The chain crosses the membrane as a helical span at residues Ala-213–Ile-233. Residues Ser-234–Ser-243 lie on the Extracellular side of the membrane. Residues Val-244–Val-264 traverse the membrane as a helical segment. Over Lys-265–Glu-284 the chain is Cytoplasmic.

Belongs to the TMEM163 family.

The protein localises to the cytoplasmic vesicle. Its subcellular location is the secretory vesicle. It is found in the synaptic vesicle membrane. The protein resides in the early endosome membrane. It localises to the late endosome membrane. The protein localises to the lysosome membrane. Its subcellular location is the cell membrane. It catalyses the reaction Zn(2+)(in) = Zn(2+)(out). Functionally, zinc ion transporter that mediates zinc efflux and plays a crucial role in intracellular zinc homeostasis. Binds the divalent cations Zn(2+), Ni(2+), and to a minor extent Cu(2+). Is a functional modulator of P2X purinoceptors, including P2RX1, P2RX3, P2RX4 and P2RX7. Plays a role in central nervous system development and is required for myelination, and survival and proliferation of oligodendrocytes. The sequence is that of Transmembrane protein 163b from Danio rerio (Zebrafish).